The sequence spans 360 residues: DNA replication and repair protein RecF (360 aa).

30-37 (GNNGSGKT) serves as a coordination point for ATP.

This sequence belongs to the RecF family.

The protein localises to the cytoplasm. In terms of biological role, the RecF protein is involved in DNA metabolism; it is required for DNA replication and normal SOS inducibility. RecF binds preferentially to single-stranded, linear DNA. It also seems to bind ATP. This is DNA replication and repair protein RecF from Mannheimia succiniciproducens (strain KCTC 0769BP / MBEL55E).